An 820-amino-acid polypeptide reads, in one-letter code: Zinc-regulated protein 8 (820 aa).

The span at 1-11 (MRSFIKTHKRA) shows a compositional bias: basic residues. Disordered regions lie at residues 1 to 54 (MRSF…VLKQ), 158 to 182 (HPNS…LSLE), 231 to 266 (SDLL…NILD), 341 to 370 (SASE…FENG), 454 to 498 (QELS…HCRS), and 777 to 820 (NKTL…PKIL). Residues 17-30 (SPRKSSNESPENRR) show a composition bias toward basic and acidic residues. Over residues 159-174 (PNSQQGSILSSQTSAD) the composition is skewed to polar residues. Residues 253-264 (KYERSPRKENNI) are compositionally biased toward basic and acidic residues. The segment covering 344–360 (EADEDDSNEEDGEEESD) has biased composition (acidic residues). A compositionally biased stretch (low complexity) spans 454–464 (QELSSHSSQSS). The span at 467 to 484 (YTERQRGFSKRDSNKSFE) shows a compositional bias: basic and acidic residues. A compositionally biased stretch (polar residues) spans 779–820 (TLASPVTPNSSFTKPSPSFTQNSSLSPIQESTTSSDASPKIL).

Belongs to the ZRG8 family.

The protein resides in the cytoplasm. It localises to the bud. It is found in the bud neck. Its subcellular location is the bud tip. Involved in maintenance of polarized growth and daughter-cell-specific transcription. In Kluyveromyces lactis (strain ATCC 8585 / CBS 2359 / DSM 70799 / NBRC 1267 / NRRL Y-1140 / WM37) (Yeast), this protein is Zinc-regulated protein 8 (ZRG8).